We begin with the raw amino-acid sequence, 207 residues long: MRELTKRQSEIYNYIKQVVQMKGYPPSVREIGEAVGLASSSTVHGHLSRLEEKGYIRRDPTKPRAIEIVSDQTNDNINMEETIHVPVIGKVTAGVPITAVENIEEYFPLPEHLTSTHNSDIFILNVVGDSMIEAGILDGDKVIVRSQTIAENGDIIVAMTEEDEATVKRFYKEKNRYRLQPENSTMEPIYLDNVAVIGKVIGLYREM.

Positions 28 to 48 (VREIGEAVGLASSSTVHGHLS) form a DNA-binding region, H-T-H motif. Residues Ser130 and Lys168 each act as for autocatalytic cleavage activity in the active site.

Belongs to the peptidase S24 family. Homodimer.

It catalyses the reaction Hydrolysis of Ala-|-Gly bond in repressor LexA.. Represses a number of genes involved in the response to DNA damage (SOS response), including recA and lexA. In the presence of single-stranded DNA, RecA interacts with LexA causing an autocatalytic cleavage which disrupts the DNA-binding part of LexA, leading to derepression of the SOS regulon and eventually DNA repair. In Staphylococcus aureus (strain Mu3 / ATCC 700698), this protein is LexA repressor.